Here is a 476-residue protein sequence, read N- to C-terminus: MNILFAVSECVPFVKSGGLADVAGALPKELKKLGVEVRIILPNYSLIPQKLRDGCTLHKVINVPLGWRNQYCGILKGEQDGITYYLIDNEYYFKRDSLYGHYDDGERFSYFSKAVLECIPHLDFEVDVLHSHDWHTAMVNFLLREKYQDNPLYEHIKTVYTIHNLQFQGVFPPEVMYDLLELGDEYFHSEQLEFYGNVNFMKGGIIASDQITAVSPTYKEEIQYEFFGEKLDGLLRKYNGKLSGIVNGIDTSVYNPETDSYITAQYDADSLYEKSKNKRALQRYFGLPEKEDTPIISMVTRLTKQKGLDLVRTVFREIMEEDVQCIILGSGDSEYEKFFEWMAYEYPEKVKVYIGFNEELAHQVYAGSDLFLMPSLFEPCGLGQLIALAYGTIPIVRETGGLNDTVQSYDEETGEGNGFSFTNFNAHDMLHTVRRAIEFYHDKPVWEQLVKQAMTEDYSWGKSALAYKKLYKSLME.

Lys15 is an ADP-alpha-D-glucose binding site.

This sequence belongs to the glycosyltransferase 1 family. Bacterial/plant glycogen synthase subfamily.

It carries out the reaction [(1-&gt;4)-alpha-D-glucosyl](n) + ADP-alpha-D-glucose = [(1-&gt;4)-alpha-D-glucosyl](n+1) + ADP + H(+). Its pathway is glycan biosynthesis; glycogen biosynthesis. Synthesizes alpha-1,4-glucan chains using ADP-glucose. This Bacillus cereus (strain ATCC 10987 / NRS 248) protein is Glycogen synthase.